Here is a 311-residue protein sequence, read N- to C-terminus: Ribonuclease 3 (311 aa).

The RNase III domain occupies 20–145 (YLCFYRILGF…FIGAIYLDQG (126 aa)). Glu-62 is a Mg(2+) binding site. The active site involves Asp-66. Mg(2+) contacts are provided by Asn-131 and Glu-134. Glu-134 is an active-site residue. A DRBM domain is found at 173–242 (NFKSKLIEWS…AQMAIKKVKD (70 aa)). Residues 250-311 (NEAKSQHSKP…EVEATETEKE (62 aa)) form a disordered region. Over residues 262-288 (VETESVEPELTESETMEPDTLETEAPE) the composition is skewed to acidic residues.

The protein belongs to the ribonuclease III family. Homodimer. Mg(2+) serves as cofactor.

The protein resides in the cytoplasm. It carries out the reaction Endonucleolytic cleavage to 5'-phosphomonoester.. Digests double-stranded RNA. Involved in the processing of primary rRNA transcript to yield the immediate precursors to the large and small rRNAs (23S and 16S). Processes some mRNAs, and tRNAs when they are encoded in the rRNA operon. Processes pre-crRNA and tracrRNA of type II CRISPR loci if present in the organism. This is Ribonuclease 3 from Bacteroides thetaiotaomicron (strain ATCC 29148 / DSM 2079 / JCM 5827 / CCUG 10774 / NCTC 10582 / VPI-5482 / E50).